Here is a 286-residue protein sequence, read N- to C-terminus: Nucleotide-binding protein PLES_48441 (286 aa).

Residue Gly8–Ser15 coordinates ATP. Asp60–Asn63 contributes to the GTP binding site.

This sequence belongs to the RapZ-like family.

Functionally, displays ATPase and GTPase activities. This is Nucleotide-binding protein PLES_48441 from Pseudomonas aeruginosa (strain LESB58).